Here is a 166-residue protein sequence, read N- to C-terminus: MSNHDQKRDEGYIEKLVQVNRVAKTVKGGRIFTFTALTVVGDGKGRVGFGRGKSREVPAAIQKAMEAARRNMIQVDLNGTTLQYAMKSAHGASKVYMQPASEGTGIIAGGAMRAVLEVAGVQNVLAKCYGSTNPVNVVHATFKGLKGMQSPESIAAKRGKRVEEII.

In terms of domain architecture, S5 DRBM spans 12 to 75; it reads YIEKLVQVNR…EAARRNMIQV (64 aa).

It belongs to the universal ribosomal protein uS5 family. As to quaternary structure, part of the 30S ribosomal subunit. Contacts proteins S4 and S8.

Functionally, with S4 and S12 plays an important role in translational accuracy. Its function is as follows. Located at the back of the 30S subunit body where it stabilizes the conformation of the head with respect to the body. The sequence is that of Small ribosomal subunit protein uS5 from Pseudomonas syringae pv. tomato (strain ATCC BAA-871 / DC3000).